Here is a 364-residue protein sequence, read N- to C-terminus: 1-aminocyclopropane-1-carboxylate oxidase homolog 11 (364 aa).

A Fe2OG dioxygenase domain is found at 213–312 (KSLLMICHYY…RISVASFFSS (100 aa)). Residues His-237, Asp-239, and His-293 each coordinate Fe cation. Residue Arg-303 coordinates 2-oxoglutarate.

The protein belongs to the iron/ascorbate-dependent oxidoreductase family. The cofactor is Fe(2+).

The protein is 1-aminocyclopropane-1-carboxylate oxidase homolog 11 of Arabidopsis thaliana (Mouse-ear cress).